Reading from the N-terminus, the 550-residue chain is MAAKEVKFGDSARARMVEGINILADAVKVTLGPKGRNVVLERSFGGPTVTKDGVSVAKEIELKDKFANMGAQMVKEVASKTSDIAGDGTTTATVLAQSIVREGMKFVAAGMNPMDLKRGIDKAVVATIAELQAFSKPCTTTKEIAQVGSISANSDSDIGEIIANAMEKVGKEGVITVEDGKSLANELDVVEGMQFDRGYLSPYFINNGDKQQALLENPFVLLFDKKISNIRDLLPILEQVAKAGRPLLIIAEDVDGEALATLVVNNIRGILKTVAVKAPGFGDRRKAMLEDIAILTGGTVIAEETGLTLEKAVLKDLGQAKRIEVAKENTTIIDGAGEAAAIEARVKQIRIQIEEATSDYDKEKLQERVAKLAGGVAVIKVGAATEVEMKEKKARVEDALHATRAAVEEGIVAGGGVALIRARAAVGKLKGDNHDQDAGIKIVLRAMEQPLREIVANAGDEPSVVVDKVQRGKGNYGYNASTGEYGDMVEMGVLDPTKVTRTALQNAASVAGLMLTTECMVAELAEDKPAGGMPDMGGMGGMGGMGGMGM.

ATP contacts are provided by residues 30–33 (TLGP), lysine 51, 87–91 (DGTTT), glycine 415, and aspartate 495.

This sequence belongs to the chaperonin (HSP60) family. In terms of assembly, forms a cylinder of 14 subunits composed of two heptameric rings stacked back-to-back. Interacts with the co-chaperonin GroES.

The protein resides in the cytoplasm. It catalyses the reaction ATP + H2O + a folded polypeptide = ADP + phosphate + an unfolded polypeptide.. Its function is as follows. Together with its co-chaperonin GroES, plays an essential role in assisting protein folding. The GroEL-GroES system forms a nano-cage that allows encapsulation of the non-native substrate proteins and provides a physical environment optimized to promote and accelerate protein folding. In Dechloromonas aromatica (strain RCB), this protein is Chaperonin GroEL.